The following is a 241-amino-acid chain: 3-oxoacyl-[acyl-carrier-protein] reductase FabG (241 aa).

NADP(+) is bound by residues 13–16 (GASG), Ser38, 57–58 (EI), and Asn83. Residue Ser135 participates in substrate binding. The active-site Proton acceptor is the Tyr148. NADP(+) is bound by residues 148–152 (YCASK) and Ile181.

It belongs to the short-chain dehydrogenases/reductases (SDR) family. In terms of assembly, homotetramer.

It carries out the reaction a (3R)-hydroxyacyl-[ACP] + NADP(+) = a 3-oxoacyl-[ACP] + NADPH + H(+). Its pathway is lipid metabolism; fatty acid biosynthesis. Catalyzes the NADPH-dependent reduction of beta-ketoacyl-ACP substrates to beta-hydroxyacyl-ACP products, the first reductive step in the elongation cycle of fatty acid biosynthesis. This chain is 3-oxoacyl-[acyl-carrier-protein] reductase FabG (fabG), found in Rickettsia felis (strain ATCC VR-1525 / URRWXCal2) (Rickettsia azadi).